Consider the following 185-residue polypeptide: Protein GrpE (185 aa).

A disordered region spans residues 1–37 (MSEEKQTPEQEAEVEAQEEAVQADTEEVTQDEQSAFQ).

The protein belongs to the GrpE family. Homodimer.

The protein resides in the cytoplasm. Participates actively in the response to hyperosmotic and heat shock by preventing the aggregation of stress-denatured proteins, in association with DnaK and GrpE. It is the nucleotide exchange factor for DnaK and may function as a thermosensor. Unfolded proteins bind initially to DnaJ; upon interaction with the DnaJ-bound protein, DnaK hydrolyzes its bound ATP, resulting in the formation of a stable complex. GrpE releases ADP from DnaK; ATP binding to DnaK triggers the release of the substrate protein, thus completing the reaction cycle. Several rounds of ATP-dependent interactions between DnaJ, DnaK and GrpE are required for fully efficient folding. The chain is Protein GrpE from Bacillus pumilus (strain SAFR-032).